Here is a 118-residue protein sequence, read N- to C-terminus: UPF0295 protein BCE_0593 (118 aa).

2 helical membrane passes run 12 to 32 and 43 to 63; these read IRTFALSLVFIGLFIAYLGVF and FMMVGFLAVIASTVVYFWIGM.

The protein belongs to the UPF0295 family.

The protein resides in the cell membrane. This chain is UPF0295 protein BCE_0593, found in Bacillus cereus (strain ATCC 10987 / NRS 248).